The primary structure comprises 182 residues: Adenine phosphoribosyltransferase (182 aa).

The protein belongs to the purine/pyrimidine phosphoribosyltransferase family. In terms of assembly, homodimer.

It localises to the cytoplasm. The catalysed reaction is AMP + diphosphate = 5-phospho-alpha-D-ribose 1-diphosphate + adenine. It functions in the pathway purine metabolism; AMP biosynthesis via salvage pathway; AMP from adenine: step 1/1. Its function is as follows. Catalyzes a salvage reaction resulting in the formation of AMP, that is energically less costly than de novo synthesis. In Campylobacter jejuni subsp. doylei (strain ATCC BAA-1458 / RM4099 / 269.97), this protein is Adenine phosphoribosyltransferase.